The sequence spans 1122 residues: MDKSAATNSATADGQNEAAAAAAAAATAAGCGSNNSSSTSSSNNTANSNNALQRLATTTSAVVASPMTINLNISTTTGGNFGVSVEPHISVESLKKIIAKKLKVAKDRICLLHREKELQDGTLRDHNLMDGSKIILIPNVETGLLAQRPENTVMQALESLNDAQVNDFLSGKTPLNLSMRLGDHMMLIQLQLSTVNPAGGGAATVAPVAGGASGSSINAAASTTSTVPVMPAGTGCSGANSTSLSSSAVLAAAAAGVGGSTGTSGSGTSSSSSSTSSSSSSSSSSSRTRSSGQRSSGRIGHGHVHSHQHPSLHAANWHGFSHGHGHGHSHGNGHGHHHHHHHHHHHHHHHHNASAVAAGSGGGMSSLRKMYGDLPSSSGASGSAPATGTGQSQSSSTLNGPDLTKLLIKGGIQNIVNSFALKDAGANARPVANGGSGSSPGKPVLEQSPIKSLSNLVSSPIKMTTIKNIPLPTTAATSSSSSCNCSSAAPSSSSSTSSGACATGGCQQDPIAAKLTSCLCTRLPTPSVAPPVATLVAPAPVARSGSTSSPSKCPESSCSGANAGFAARSTLAGTRVTFSGNSMLHKTGNNRITRTKHRHYHGQGHGHGHGNGHSSSSSSSSSSSSSHFFNHACAGNQPSVNAAAFATSSSSSSSSPSSSSSSPSKRRKLEQGMGAGAVGATAATATAAATVALPASTSATTAEPDDSLLGVSDTRTLAEASRNLTQTLRKLSKEVFTNKIDLSGAGVVSSGRSSSSGATSSGAASGEEAPRKSGSGAVIESMKNHGKGIYSGTFSGTLNPALQDRFGRPKRDISTVIHILNDLLSATPQYGRGARISFEAPTTGSVSGSGSGSGSSGSSSTTSSGSGLHHGSRSKMYSSKHHNCAKCNSRAQQQQQQSATLASGSGGSCSFRDCPSYHSSSAATKASTSSKSSSHSCCQTAEAPSSMTSQSNGCTCRYRRDDGQGEREREHTCQKCTVELANMKTRSKMDQLRLVMQQHKQKREARKLKSGPYATAASASAADSLSSIAAGGTAAVPMGAAAQYSAVSALVATPLQPAAVPVQTGKAAPANSITGNSSNANVNGNTSTAPATAATSAAAAPTAAPPSEVSPNHIVEEVDTAA.

Positions 69–143 (INLNISTTTG…IILIPNVETG (75 aa)) constitute a Ubiquitin-like domain. Positions 210 to 300 (GGASGSSINA…SGQRSSGRIG (91 aa)) are required for interaction with Pc. 8 disordered regions span residues 257–399 (VGGS…STLN), 596–630 (KHRH…HFFN), 645–677 (FATS…GAGA), 746–775 (GVVS…KSGS), 840–876 (APTT…RSKM), 886–905 (KCNS…ASGS), 922–955 (AATK…NGCT), and 1067–1122 (AAPA…DTAA). Positions 266–298 (SGTSSSSSSTSSSSSSSSSSSRTRSSGQRSSGR) are enriched in low complexity. 2 stretches are compositionally biased toward basic residues: residues 300–310 (GHGHVHSHQHP) and 321–352 (SHGH…HHHN). Positions 375–397 (PSSSGASGSAPATGTGQSQSSST) are enriched in low complexity. Over residues 596–610 (KHRHYHGQGHGHGHG) the composition is skewed to basic residues. Low complexity-rich tracts occupy residues 612 to 627 (GHSS…SSSH), 648 to 663 (SSSS…SSSP), 746 to 766 (GVVS…AASG), 856 to 867 (SGSSSTTSSGSG), 889 to 903 (SRAQ…TLAS), and 922 to 936 (AATK…SSHS). 2 stretches are compositionally biased toward polar residues: residues 937–954 (CCQT…SNGC) and 1071–1085 (NSIT…VNGN). The segment covering 1086–1107 (TSTAPATAATSAAAAPTAAPPS) has biased composition (low complexity).

As to quaternary structure, interacts with PRC1 complex member polycomb protein Pc; the interaction targets Pc for ubiquitin-independent proteasomal degradation. Does not interact with PRC1 members Ph, Psc or Sce so does not appear to be a member of the PRC1 complex. Interacts with 26S proteasome regulatory subunit Rpn10.

It is found in the nucleus. Its function is as follows. Facilitates ubiquitin-independent proteasomal degradation of polycomb protein Pc by interacting directly with the proteasome and recruiting Pc to it. This chain is Midnolin homolog, found in Drosophila melanogaster (Fruit fly).